The sequence spans 169 residues: Cell division inhibitor SulA (169 aa).

The tract at residues 106–112 (ALRTGNY) is ftsZ binding. Residues 162-169 (KIHSNLYH) are lon protease binding.

The protein belongs to the SulA family. Interacts with FtsZ. In terms of processing, is rapidly cleaved and degraded by the Lon protease once DNA damage is repaired.

Component of the SOS system and an inhibitor of cell division. Accumulation of SulA causes rapid cessation of cell division and the appearance of long, non-septate filaments. In the presence of GTP, binds a polymerization-competent form of FtsZ in a 1:1 ratio, thus inhibiting FtsZ polymerization and therefore preventing it from participating in the assembly of the Z ring. This mechanism prevents the premature segregation of damaged DNA to daughter cells during cell division. The chain is Cell division inhibitor SulA from Salmonella arizonae (strain ATCC BAA-731 / CDC346-86 / RSK2980).